Consider the following 369-residue polypeptide: Anhydro-N-acetylmuramic acid kinase (369 aa).

12 to 19 (GTSLDGVD) is a binding site for ATP.

Belongs to the anhydro-N-acetylmuramic acid kinase family.

It carries out the reaction 1,6-anhydro-N-acetyl-beta-muramate + ATP + H2O = N-acetyl-D-muramate 6-phosphate + ADP + H(+). Its pathway is amino-sugar metabolism; 1,6-anhydro-N-acetylmuramate degradation. It participates in cell wall biogenesis; peptidoglycan recycling. Functionally, catalyzes the specific phosphorylation of 1,6-anhydro-N-acetylmuramic acid (anhMurNAc) with the simultaneous cleavage of the 1,6-anhydro ring, generating MurNAc-6-P. Is required for the utilization of anhMurNAc either imported from the medium or derived from its own cell wall murein, and thus plays a role in cell wall recycling. This chain is Anhydro-N-acetylmuramic acid kinase, found in Actinobacillus pleuropneumoniae serotype 3 (strain JL03).